Consider the following 902-residue polypeptide: MRLFVSEGSPGSLPVLAAAARARGRAELLISTVGPEECVVPFLTRPKVPVLQLDSGNYLFSASAICRYFFLLCGWEQDDLTNQWLEWEATELQPVLSAALHCLVVQGKKGEDILGPLRRVLTHIDHSLSRQNCPFLAGDTESLADIVLWGALYPLLQDPAYLPEELGALQSWFQTLSTQEPCQRAAETVLKQQGVLALRLYLQKQPQPQPPPPEGRTVSNELEEEELATLSEEDIVTAVAAWEKGLESLPPLKLQQHPVLPVPGERNVLITSALPYVNNVPHLGNIIGCVLSADVFARYCRLRQWNTLYLCGTDEYGTATETKAMEEGLTPREICDKYHAIHADIYRWFGISFDTFGRTTTPQQTKITQDIFQRLLTRGFVLRDTVEQLRCERCARFLADRFVEGVCPFCGYEEARGDQCDRCGKLINAIELKKPQCKICRSCPVVRSSQHLFLDLPKLEKRLEDWLGKTVPGSDWTPNARFIIRSWLRDGLKPRCITRDLKWGTPVPLEGFEDKVFYVWFDATIGYVSITANYTDQWEKWWKNPEQVDLYQFMAKDNVPFHGLVFPCSVLGAEDNYTLVKHIIATEYLNYEDGKFSKSRGIGVFGDMAKDTGIPADIWRFYLLYIRPEGQDSAFSWTDLLIKNNSELLNNLGNFINRAGMFVSKFFGGCVPEMALTPDDRRLVAHVSWELQHYHQLLEKVRIRDALRSILTISRHGNQYIQVNEPWKRIKGGEMDRQRAGTVTGMAVNMAALLSVMLQPYMPTVSSTIQTQLQLPPAACRILATSFICTLPAGHRIGTVSPLFQKLENDQIENLRQRFGGGQAKGSPKPAAVEAVTAAGSQHIQTLTDEVTKQGNVVRELKAQKADKNQVAAEVAKLLDLKKQLALAEGKPIETPKGKKKK.

The GST C-terminal domain occupies 74 to 212; the sequence is GWEQDDLTNQ…QKQPQPQPPP (139 aa). Residues 275-285 carry the 'HIGH' region motif; sequence PYVNNVPHLGN. The short motif at 595 to 599 is the 'KMSKS' region element; it reads KFSKS. Lys-598 lines the ATP pocket. Ser-827 is modified (phosphoserine). Thr-837 is subject to Phosphothreonine. One can recognise a WHEP-TRS domain in the interval 843–899; the sequence is HIQTLTDEVTKQGNVVRELKAQKADKNQVAAEVAKLLDLKKQLALAEGKPIETPKGK.

This sequence belongs to the class-I aminoacyl-tRNA synthetase family. As to quaternary structure, monomer. Part of a multisubunit complex that groups tRNA ligases for Arg (RARS1), Asp (DARS1), Gln (QARS1), Ile (IARS1), Leu (LARS1), Lys (KARS1), Met (MARS1) the bifunctional ligase for Glu and Pro (EPRS1) and the auxiliary subunits AIMP1/p43, AIMP2/p38 and EEF1E1/p18. Forms a linear complex that contains MARS1, EEF1E1, EPRS1 and AIMP2 that is at the core of the multisubunit complex.

It localises to the cytoplasm. It is found in the cytosol. The protein resides in the nucleus. Its subcellular location is the nucleolus. It carries out the reaction tRNA(Met) + L-methionine + ATP = L-methionyl-tRNA(Met) + AMP + diphosphate. Functionally, catalyzes the specific attachment of an amino acid to its cognate tRNA in a 2 step reaction: the amino acid (AA) is first activated by ATP to form AA-AMP and then transferred to the acceptor end of the tRNA. Plays a role in the synthesis of ribosomal RNA in the nucleolus. The chain is Methionine--tRNA ligase, cytoplasmic (Mars1) from Mus musculus (Mouse).